A 68-amino-acid polypeptide reads, in one-letter code: Large ribosomal subunit protein uL29 (68 aa).

The protein belongs to the universal ribosomal protein uL29 family.

The polypeptide is Large ribosomal subunit protein uL29 (Streptococcus gordonii (strain Challis / ATCC 35105 / BCRC 15272 / CH1 / DL1 / V288)).